We begin with the raw amino-acid sequence, 234 residues long: Synaptogyrin-1 (234 aa).

The residue at position 1 (Met1) is an N-acetylmethionine. Residues Met1–Gln23 are Cytoplasmic-facing. The region spanning Leu20–Gln173 is the MARVEL domain. The helical transmembrane segment at Pro24–Val44 threads the bilayer. Topologically, residues Asn45–Gly71 are lumenal. Residues Val72–Phe92 form a helical membrane-spanning segment. Residues Pro93–Ala104 are Cytoplasmic-facing. Residues Val105 to Phe125 traverse the membrane as a helical segment. Residues Leu126–Arg148 lie on the Lumenal side of the membrane. A helical transmembrane segment spans residues Ala149 to Phe169. The Cytoplasmic segment spans residues Gln170–Tyr234. Residues Glu201–Tyr234 are disordered.

It belongs to the synaptogyrin family. As to expression, nervous system (at protein level).

The protein localises to the cytoplasmic vesicle. Its subcellular location is the secretory vesicle. It is found in the synaptic vesicle membrane. The protein resides in the melanosome. In terms of biological role, may play a role in regulated exocytosis. Modulates the localization of synaptophysin/SYP into synaptic-like microvesicles and may therefore play a role in synaptic-like microvesicle formation and/or maturation. Involved in the regulation of short-term and long-term synaptic plasticity. This is Synaptogyrin-1 from Rattus norvegicus (Rat).